The sequence spans 375 residues: Neuropeptide Y receptor type 4 (375 aa).

At 1-39 (MNTSHFLAPLFPGSLQGKNGTNPLDSPYNFSDGCQDSAE) the chain is on the extracellular side. Residues Asn2, Asn19, and Asn29 are each glycosylated (N-linked (GlcNAc...) asparagine). The helical transmembrane segment at 40-60 (LLAFIITTYSIETILGVLGNL) threads the bilayer. The Cytoplasmic portion of the chain corresponds to 61-78 (CLIFVTTRQKEKSNVTNL). The helical transmembrane segment at 79 to 99 (LIANLAFSDFLMCLICQPLTV) threads the bilayer. The Extracellular portion of the chain corresponds to 100–116 (TYTIMDYWIFGEVLCKM). Cys114 and Cys201 are oxidised to a cystine. The helical transmembrane segment at 117-137 (LTFIQCMSVTVSILSLVLVAL) threads the bilayer. At 138-155 (ERHQLIINPTGWKPSIFQ) the chain is on the cytoplasmic side. Residues 156–176 (AYLGIVVIWFVSCFLSLPFLA) form a helical membrane-spanning segment. Over 177–211 (NSTLNDLFHYNHSKVVEFLEDKVVCFVSWSSDHHR) the chain is Extracellular. Asn187 carries an N-linked (GlcNAc...) asparagine glycan. Residues 212–232 (LIYTTFLLLFQYCIPLAFILV) traverse the membrane as a helical segment. Residues 233–266 (CYIRIYQRLQRQKHVFHAHACSSRAGQMKRINSM) are Cytoplasmic-facing. A helical transmembrane segment spans residues 267–287 (LMTMVTAFAVLWLPLHVFNTL). Over 288–301 (EDWYQEAIPACHGN) the chain is Extracellular. A helical transmembrane segment spans residues 302–322 (LIFLMCHLLAMASTCVNPFIY). Residues 323–375 (GFLNINFKKDIKALVLTCHCRSPRGESEHLPLSTVHTDLSKGSMRMGSKSNFI) are Cytoplasmic-facing. Residue Cys340 is the site of S-palmitoyl cysteine attachment.

This sequence belongs to the G-protein coupled receptor 1 family. As to expression, heart, detected in small intestine.

The protein localises to the cell membrane. In terms of biological role, g protein-coupled receptor for PPY/pancreatic polypeptide/PP that is negatively coupled to cAMP. Has much lower affinity for the NPY/neuropeptide Y and PYY/peptide YY. This chain is Neuropeptide Y receptor type 4 (Npy4r), found in Mus musculus (Mouse).